The chain runs to 126 residues: NADP-reducing hydrogenase subunit HndB (126 aa).

Heterotetramer composed of HndA, HndB, HndC and HndD subunits. HndA and HndB could form a heterodimeric intermediate in the electron transfer between the active site of hydrogenase subunit HndD and the NADP reduction site of the reducing subunit HndC.

The enzyme catalyses H2 + NADP(+) = NADPH + H(+). Inhibited by oxygen. Its function is as follows. Catalyzes the reduction of NADP in the presence of molecular H2 to yield NADPH. The protein is NADP-reducing hydrogenase subunit HndB (hndB) of Solidesulfovibrio fructosivorans (Desulfovibrio fructosivorans).